We begin with the raw amino-acid sequence, 246 residues long: Mast cell protease-like protein (246 aa).

A signal peptide spans 1-18; that stretch reads MQALLFLMALLLPSGAGA. A propeptide spans 19–20 (activation peptide); it reads EE. One can recognise a Peptidase S1 domain in the interval 21–244; that stretch reads IIGGVESEPH…HVPWINRVIK (224 aa). A disulfide bridge connects residues cysteine 50 and cysteine 66. Residues histidine 65 and aspartate 109 each act as charge relay system in the active site. 2 cysteine pairs are disulfide-bonded: cysteine 143/cysteine 208 and cysteine 174/cysteine 187. Serine 202 serves as the catalytic Charge relay system.

It belongs to the peptidase S1 family. Granzyme subfamily.

The chain is Mast cell protease-like protein (Mcptl) from Mus musculus (Mouse).